The chain runs to 1392 residues: ENHANCER OF AG-4 protein 2 (1392 aa).

In terms of domain architecture, PWWP spans 20–77; that stretch reads LGDLVLAKVKGFPAWPAKISRPEDWDRAPDPKKYFVQFFGTEEIAFVAPPDIQAFTSE. A compositionally biased stretch (polar residues) spans 184-194; sequence ESKVKTTSPVS. Disordered stretches follow at residues 184 to 354, 384 to 428, 575 to 613, and 723 to 766; these read ESKV…STGT, KRQR…PAAQ, KKPQ…GERL, and QGHH…GGSL. Basic and acidic residues-rich tracts occupy residues 196–215, 239–258, and 311–345; these read SLEH…DKGT, KEAG…DKSN, and LESE…KCEI. Over residues 391 to 400 the composition is skewed to polar residues; sequence EHATSPSFSG. The segment covering 401–417 has biased composition (basic and acidic residues); that stretch reads SRDKSGKGHLEQKDRSS. Composition is skewed to polar residues over residues 591 to 601 and 725 to 744; these read KISSSQSQPAN and HHQQ…SRNQ. One can recognise a CID domain in the interval 771–912; it reads EAAISRDAFE…RYIDDIRASG (142 aa). Disordered regions lie at residues 957 to 986, 1014 to 1356, and 1369 to 1392; these read FFSS…AGER, LEME…NYQP, and PGHT…WRPA. Pro residues predominate over residues 1059-1129; the sequence is EDSPPLPQES…SPPPPPPPPS (71 aa). A compositionally biased stretch (polar residues) spans 1157-1175; the sequence is LSHQTYPGSMQQDRSSIFT. Low complexity predominate over residues 1215 to 1225; it reads SSREPSSFTSS. Composition is skewed to polar residues over residues 1240 to 1255 and 1265 to 1284; these read EASS…TPLS and APSS…QHSY. The segment covering 1293–1306 has biased composition (basic and acidic residues); that stretch reads QRDDARRYRNEEPW. Residues 1311 to 1320 show a composition bias toward polar residues; the sequence is SGHSAENQNG.

In terms of tissue distribution, expressed in the inflorescence meristem, floral primordia, inflorescence stem, and floral pedicels. Also detected in the shoot apical meristem, stems, leaves, embryos, and roots.

It localises to the nucleus. Transcription factor that functions as a repressor of flowering by enhancing the expression of several genes that delay flowering including FLC, FLM/MAF1, MAF2 and SVP. Also acts in the floral homeotic AGAMOUS (AG) pathway, specifically by processing the AGAMOUS pre-mRNA. Functions in association with HUA1 and HEN4 in AG pre-mRNA processing. Involved in all three aspects of the AG functions, the specification of stamen and carpel identities, the control of floral determinacy, and the spatial restriction of AP1 expression. Acts as a transcription regulator that controls anthocyanin accumulation. This Arabidopsis thaliana (Mouse-ear cress) protein is ENHANCER OF AG-4 protein 2.